A 290-amino-acid polypeptide reads, in one-letter code: 4-hydroxy-tetrahydrodipicolinate synthase (290 aa).

Thr-44 serves as a coordination point for pyruvate. Residue Tyr-132 is the Proton donor/acceptor of the active site. Lys-160 acts as the Schiff-base intermediate with substrate in catalysis. Ile-202 contacts pyruvate.

The protein belongs to the DapA family. As to quaternary structure, homotetramer; dimer of dimers.

The protein localises to the cytoplasm. The catalysed reaction is L-aspartate 4-semialdehyde + pyruvate = (2S,4S)-4-hydroxy-2,3,4,5-tetrahydrodipicolinate + H2O + H(+). It participates in amino-acid biosynthesis; L-lysine biosynthesis via DAP pathway; (S)-tetrahydrodipicolinate from L-aspartate: step 3/4. Functionally, catalyzes the condensation of (S)-aspartate-beta-semialdehyde [(S)-ASA] and pyruvate to 4-hydroxy-tetrahydrodipicolinate (HTPA). This Geobacter sulfurreducens (strain ATCC 51573 / DSM 12127 / PCA) protein is 4-hydroxy-tetrahydrodipicolinate synthase.